The chain runs to 189 residues: Probable pericyclase scpY (189 aa).

Belongs to the pericyclase pydY family.

The protein operates within mycotoxin biosynthesis. Probable pericyclase; part of the gene scp cluster that mediates the biosynthesis of a hirsutellone-like compound that has still to be identified. This chain is Probable pericyclase scpY, found in Mollisia scopiformis (Conifer needle endophyte fungus).